The chain runs to 191 residues: MARRKAAPKRETLPDPLFHSELLAKFINAVMRNGKKSVAEKIVYGALDVVAKRVQNKSGEQGDGDGESGGKAGGIKKRSLGDIRTDENARALALETFKGALDKVMPNVEVKSRRVGGSTYQVPVEIRMARRQALARRWLVEYANKRNEKTMVLRLAHEILDAVEGRGGAIKKREDVHRMAKANQAFAHYKW.

The disordered stretch occupies residues 56–80; that stretch reads NKSGEQGDGDGESGGKAGGIKKRSL.

Belongs to the universal ribosomal protein uS7 family. As to quaternary structure, part of the 30S ribosomal subunit. Contacts proteins S9 and S11.

In terms of biological role, one of the primary rRNA binding proteins, it binds directly to 16S rRNA where it nucleates assembly of the head domain of the 30S subunit. Is located at the subunit interface close to the decoding center, probably blocks exit of the E-site tRNA. The sequence is that of Small ribosomal subunit protein uS7 from Coxiella burnetii (strain RSA 493 / Nine Mile phase I).